Here is a 461-residue protein sequence, read N- to C-terminus: Photosystem II CP43 reaction center protein (461 aa).

A propeptide spanning residues 1–2 (ME) is cleaved from the precursor. An N-acetylthreonine modification is found at Thr3. Position 3 is a phosphothreonine (Thr3). The next 5 membrane-spanning stretches (helical) occupy residues 57–81 (LFEV…PHLA), 122–143 (IIGP…KDKN), 166–188 (KAMF…RVIS), 243–263 (KPFS…LSYS), and 279–300 (WFNN…ASQA). Position 355 (Glu355) interacts with [CaMn4O5] cluster. The helical transmembrane segment at 435 to 459 (RARAASGGFEKGLDRENEPVLSMKL) threads the bilayer.

This sequence belongs to the PsbB/PsbC family. PsbC subfamily. As to quaternary structure, PSII is composed of 1 copy each of membrane proteins PsbA, PsbB, PsbC, PsbD, PsbE, PsbF, PsbH, PsbI, PsbJ, PsbK, PsbL, PsbM, PsbT, PsbX, PsbY, PsbZ, Psb30/Ycf12, at least 3 peripheral proteins of the oxygen-evolving complex and a large number of cofactors. It forms dimeric complexes. It depends on Binds multiple chlorophylls and provides some of the ligands for the Ca-4Mn-5O cluster of the oxygen-evolving complex. It may also provide a ligand for a Cl- that is required for oxygen evolution. PSII binds additional chlorophylls, carotenoids and specific lipids. as a cofactor.

Its subcellular location is the plastid. The protein resides in the cyanelle thylakoid membrane. Functionally, one of the components of the core complex of photosystem II (PSII). It binds chlorophyll and helps catalyze the primary light-induced photochemical processes of PSII. PSII is a light-driven water:plastoquinone oxidoreductase, using light energy to abstract electrons from H(2)O, generating O(2) and a proton gradient subsequently used for ATP formation. The sequence is that of Photosystem II CP43 reaction center protein from Cyanophora paradoxa.